The chain runs to 157 residues: S-ribosylhomocysteine lyase 2 (157 aa).

Positions 54, 58, and 124 each coordinate Fe cation.

The protein belongs to the LuxS family. As to quaternary structure, homodimer. It depends on Fe cation as a cofactor.

It catalyses the reaction S-(5-deoxy-D-ribos-5-yl)-L-homocysteine = (S)-4,5-dihydroxypentane-2,3-dione + L-homocysteine. In terms of biological role, involved in the synthesis of autoinducer 2 (AI-2) which is secreted by bacteria and is used to communicate both the cell density and the metabolic potential of the environment. The regulation of gene expression in response to changes in cell density is called quorum sensing. Catalyzes the transformation of S-ribosylhomocysteine (RHC) to homocysteine (HC) and 4,5-dihydroxy-2,3-pentadione (DPD). The chain is S-ribosylhomocysteine lyase 2 from Lactobacillus delbrueckii subsp. bulgaricus (strain ATCC BAA-365 / Lb-18).